The following is a 389-amino-acid chain: MSDLYIGLMSGTSLDGVDGVVVDFSGAHLRVLAHVNAPLSTALTHELLALNSPGTNELHRAALAANALVRVYAHVVAQLLELADIEHSAVAAIGAHGQTVRHQPQSFDGTGYTLQLNNPALLAELTGMDVVADFRSRDVAAGGQGAPLVPAFHQSAFGQPDQTLAVLNLGGMSNLTVLGPCPATESPAGVLDADPPSCFHSHDVLGFDCGPGNALMDTWCLQHIGQPFDADGAWAAAGRVHGELLAALLDEPYFAQSAPKSTGRDLFNSGWLTWKLEKFSSVAPVDVQATLTELTASVCATCVKRYGSESSTLIVCGGGAFNSHLMVRLQALLPRLKVISSQARGLPPLQVEAAAFAWLARNTLLRKTSSLEKVTGASGARILGAIYPA.

11–18 is a binding site for ATP; sequence GTSLDGVD.

Belongs to the anhydro-N-acetylmuramic acid kinase family.

The enzyme catalyses 1,6-anhydro-N-acetyl-beta-muramate + ATP + H2O = N-acetyl-D-muramate 6-phosphate + ADP + H(+). It functions in the pathway amino-sugar metabolism; 1,6-anhydro-N-acetylmuramate degradation. It participates in cell wall biogenesis; peptidoglycan recycling. Its function is as follows. Catalyzes the specific phosphorylation of 1,6-anhydro-N-acetylmuramic acid (anhMurNAc) with the simultaneous cleavage of the 1,6-anhydro ring, generating MurNAc-6-P. Is required for the utilization of anhMurNAc either imported from the medium or derived from its own cell wall murein, and thus plays a role in cell wall recycling. The polypeptide is Anhydro-N-acetylmuramic acid kinase (Albidiferax ferrireducens (strain ATCC BAA-621 / DSM 15236 / T118) (Rhodoferax ferrireducens)).